The sequence spans 218 residues: Ribonuclease T (218 aa).

In terms of domain architecture, Exonuclease spans 22–196; it reads VVVDVETAGF…YDAMKTAELF (175 aa). The Mg(2+) site is built by aspartate 25, glutamate 27, histidine 183, and aspartate 188. The active-site Proton donor/acceptor is histidine 183.

It belongs to the RNase T family. As to quaternary structure, homodimer. Requires Mg(2+) as cofactor.

Functionally, trims short 3' overhangs of a variety of RNA species, leaving a one or two nucleotide 3' overhang. Responsible for the end-turnover of tRNA: specifically removes the terminal AMP residue from uncharged tRNA (tRNA-C-C-A). Also appears to be involved in tRNA biosynthesis. This is Ribonuclease T from Hahella chejuensis (strain KCTC 2396).